The chain runs to 132 residues: D-ribose pyranase (132 aa).

Histidine 20 functions as the Proton donor in the catalytic mechanism. Substrate contacts are provided by residues aspartate 28, histidine 99, and 121-123 (YSN).

The protein belongs to the RbsD / FucU family. RbsD subfamily. Homodecamer.

It localises to the cytoplasm. It catalyses the reaction beta-D-ribopyranose = beta-D-ribofuranose. It functions in the pathway carbohydrate metabolism; D-ribose degradation; D-ribose 5-phosphate from beta-D-ribopyranose: step 1/2. In terms of biological role, catalyzes the interconversion of beta-pyran and beta-furan forms of D-ribose. This chain is D-ribose pyranase, found in Streptococcus agalactiae serotype Ia (strain ATCC 27591 / A909 / CDC SS700).